The sequence spans 457 residues: Proline-specific permease ProY (457 aa).

The Cytoplasmic portion of the chain corresponds to 1–17 (MESKNKLKRGLSTRHIR). Transmembrane regions (helical) follow at residues 18-38 (FMAL…DAIK) and 39-59 (MAGP…YIIM). The Cytoplasmic segment spans residues 60–84 (RALGEMSVHNPAASSFSRYAQENLG). A helical transmembrane segment spans residues 85–105 (PLAGYITGWTYCFEILIVAIA). Residues 106 to 113 (DVTAFGIY) lie on the Periplasmic side of the membrane. The chain crosses the membrane as a helical span at residues 114-134 (MGVWFPTVPHWIWVLSVVLII). Residues 135-156 (CAVNLMSVKVFGELEFWFSFFK) are Cytoplasmic-facing. The helical transmembrane segment at 157–177 (VATIIIMIVAGFGIIIWGIGN) threads the bilayer. Residues 178 to 197 (GGQPTGIHNLWSNGGFFSNG) are Periplasmic-facing. Residues 198 to 218 (WLGMVMSLQMVMFAYGGIEII) traverse the membrane as a helical segment. The Cytoplasmic segment spans residues 219–242 (GITAGEAKDPEKSIPRAINSVPMR). The chain crosses the membrane as a helical span at residues 243 to 263 (ILVFYVGTLFVIMSIYPWNQV). Over 264 to 277 (GTAGSPFVLTFQHM) the chain is Periplasmic. A helical membrane pass occupies residues 278-298 (GITFAASILNFVVLTASLSAI). The Cytoplasmic segment spans residues 299–331 (NSDVFGVGRMLHGMAEQGSAPKIFSKTSRRGIP). The chain crosses the membrane as a helical span at residues 332–352 (WVTVLVMTTALLFAVYLNYIM). Topologically, residues 353-355 (PEN) are periplasmic. A helical transmembrane segment spans residues 356–376 (VFLVIASLATFATVWVWIMIL). Over 377–399 (LSQIAFRRRLPPEEVKALKFKVP) the chain is Cytoplasmic. The chain crosses the membrane as a helical span at residues 400–420 (GGVATTIGGLIFLLFIIGLIG). The Periplasmic portion of the chain corresponds to 421 to 424 (YHPD). Residues 425 to 445 (TRISLYVGFAWIVVLLIGWMF) traverse the membrane as a helical segment. Over 446–457 (KRRHDRQLAENQ) the chain is Cytoplasmic.

This sequence belongs to the amino acid-polyamine-organocation (APC) superfamily. Amino acid transporter (AAT) (TC 2.A.3.1) family.

It is found in the cell inner membrane. Functionally, permease that is involved in the transport across the cytoplasmic membrane of proline. The chain is Proline-specific permease ProY (proY) from Escherichia coli O157:H7.